A 325-amino-acid polypeptide reads, in one-letter code: Thiamine-monophosphate kinase (325 aa).

Residues Asp-30, Ser-45, Thr-46, and Asp-47 each contribute to the Mg(2+) site. Residue His-54 participates in substrate binding. Positions 75 and 122 each coordinate Mg(2+). ATP contacts are provided by residues Gly-121–Asp-122 and Arg-146. Mg(2+) is bound at residue Asp-212. Residue Ser-214 participates in ATP binding. A Mg(2+)-binding site is contributed by Asp-215. Substrate contacts are provided by Glu-263 and Tyr-319.

The protein belongs to the thiamine-monophosphate kinase family.

The catalysed reaction is thiamine phosphate + ATP = thiamine diphosphate + ADP. It participates in cofactor biosynthesis; thiamine diphosphate biosynthesis; thiamine diphosphate from thiamine phosphate: step 1/1. Its activity is regulated as follows. Is markedly activated by the monovalent cations K(+), NH(4)(+), and Rb(+). Is significantly inhibited by ADP, AMP, p-chloromercuribenzoate, N-ethylmaleimide, pyrophosphate, and EDTA. Catalyzes the ATP-dependent phosphorylation of thiamine-monophosphate (TMP) to form thiamine-pyrophosphate (TPP), the active form of vitamin B1. Cannot use thiamine as substrate. Is highly specific for ATP as phosphate donor. In Escherichia coli (strain K12), this protein is Thiamine-monophosphate kinase (thiL).